Reading from the N-terminus, the 138-residue chain is Cysteine desulfuration protein SufE (138 aa).

Cys-51 acts as the Cysteine persulfide intermediate in catalysis.

This sequence belongs to the SufE family. As to quaternary structure, homodimer. Interacts with SufS.

Its subcellular location is the cytoplasm. The protein operates within cofactor biosynthesis; iron-sulfur cluster biosynthesis. In terms of biological role, participates in cysteine desulfuration mediated by SufS. Cysteine desulfuration mobilizes sulfur from L-cysteine to yield L-alanine and constitutes an essential step in sulfur metabolism for biosynthesis of a variety of sulfur-containing biomolecules. Functions as a sulfur acceptor for SufS, by mediating the direct transfer of the sulfur atom from the S-sulfanylcysteine of SufS, an intermediate product of cysteine desulfuration process. The polypeptide is Cysteine desulfuration protein SufE (Citrobacter koseri (strain ATCC BAA-895 / CDC 4225-83 / SGSC4696)).